We begin with the raw amino-acid sequence, 452 residues long: UPF0210 protein Cthe_0410 (452 aa).

The protein belongs to the UPF0210 family. In terms of assembly, homodimer.

The polypeptide is UPF0210 protein Cthe_0410 (Acetivibrio thermocellus (strain ATCC 27405 / DSM 1237 / JCM 9322 / NBRC 103400 / NCIMB 10682 / NRRL B-4536 / VPI 7372) (Clostridium thermocellum)).